A 277-amino-acid chain; its full sequence is Bleomycin hydrolase (277 aa).

Cys53 is an active-site residue.

This sequence belongs to the peptidase C1 family. In terms of assembly, homohexamer. Interacts with NUDT12 (via ANK repeats).

The protein resides in the cytoplasm. It is found in the cytoplasmic granule. It carries out the reaction Inactivates bleomycin B2 (a cytotoxic glycometallopeptide) by hydrolysis of a carboxyamide bond of beta-aminoalanine, but also shows general aminopeptidase activity. The specificity varies somewhat with source, but amino acid arylamides of Met, Leu and Ala are preferred.. Strongly inhibited by leupeptin, puromycin, NEM, and divalent cations. The normal physiological role of BLM hydrolase is unknown, but it catalyzes the inactivation of the antitumor drug BLM (a glycopeptide) by hydrolyzing the carboxamide bond of its B-aminoalaninamide moiety thus protecting normal and malignant cells from BLM toxicity. This is Bleomycin hydrolase (BLMH) from Oryctolagus cuniculus (Rabbit).